The sequence spans 72 residues: Translation initiation factor IF-1 (72 aa).

Residues 1-72 (MSKDDVIEMQ…TRGRITWRAK (72 aa)) form the S1-like domain.

Belongs to the IF-1 family. In terms of assembly, component of the 30S ribosomal translation pre-initiation complex which assembles on the 30S ribosome in the order IF-2 and IF-3, IF-1 and N-formylmethionyl-tRNA(fMet); mRNA recruitment can occur at any time during PIC assembly.

Its subcellular location is the cytoplasm. One of the essential components for the initiation of protein synthesis. Stabilizes the binding of IF-2 and IF-3 on the 30S subunit to which N-formylmethionyl-tRNA(fMet) subsequently binds. Helps modulate mRNA selection, yielding the 30S pre-initiation complex (PIC). Upon addition of the 50S ribosomal subunit IF-1, IF-2 and IF-3 are released leaving the mature 70S translation initiation complex. The polypeptide is Translation initiation factor IF-1 (Clostridium botulinum (strain ATCC 19397 / Type A)).